A 291-amino-acid chain; its full sequence is MKDYLVKALAFDGEVRAYSVRTTNTVSEAQRRHDTWRTASAALGRSLTAGTMMGAMLKGDQKLTIKVEGNGPIGPILVDAHANGDVRGYVTNPHVDFEGTEQGKLRVYQAVGTEGFVTVIKDIGMREPFIGQSPIVSGELGEDFTYYFAVSEQTPSSVGVGVLVNGDDSILAAGGFILQIMPGAQEETISFIEERLQKIPPVSTLIEQGLSPEELLYAVLGEDKVKVLETMDVQFNCTCSRERIESVLISLGKTELEQVREEEEETEVHCHFCNERYKFSKEDITNLIENL.

2 cysteine pairs are disulfide-bonded: C237/C239 and C270/C273.

The protein belongs to the HSP33 family. In terms of processing, under oxidizing conditions two disulfide bonds are formed involving the reactive cysteines. Under reducing conditions zinc is bound to the reactive cysteines and the protein is inactive.

The protein resides in the cytoplasm. Its function is as follows. Redox regulated molecular chaperone. Protects both thermally unfolding and oxidatively damaged proteins from irreversible aggregation. Plays an important role in the bacterial defense system toward oxidative stress. This is 33 kDa chaperonin from Bacillus anthracis (strain A0248).